Reading from the N-terminus, the 322-residue chain is uncharacterized protein (322 aa).

The disordered stretch occupies residues 269–289 (QDEEEEPRDERRPRRRLGKAQ).

This is an uncharacterized protein from Sinorhizobium fredii (strain NBRC 101917 / NGR234).